A 570-amino-acid chain; its full sequence is Dihydroxy-acid dehydratase (570 aa).

Residue cysteine 61 coordinates [2Fe-2S] cluster. Aspartate 94 contributes to the Mg(2+) binding site. Cysteine 135 serves as a coordination point for [2Fe-2S] cluster. Mg(2+) is bound by residues aspartate 136 and lysine 137. Lysine 137 is subject to N6-carboxylysine. Cysteine 207 contributes to the [2Fe-2S] cluster binding site. Glutamate 459 serves as a coordination point for Mg(2+). Catalysis depends on serine 485, which acts as the Proton acceptor.

The protein belongs to the IlvD/Edd family. As to quaternary structure, homodimer. [2Fe-2S] cluster serves as cofactor. Requires Mg(2+) as cofactor.

It catalyses the reaction (2R)-2,3-dihydroxy-3-methylbutanoate = 3-methyl-2-oxobutanoate + H2O. The catalysed reaction is (2R,3R)-2,3-dihydroxy-3-methylpentanoate = (S)-3-methyl-2-oxopentanoate + H2O. The protein operates within amino-acid biosynthesis; L-isoleucine biosynthesis; L-isoleucine from 2-oxobutanoate: step 3/4. Its pathway is amino-acid biosynthesis; L-valine biosynthesis; L-valine from pyruvate: step 3/4. Its function is as follows. Functions in the biosynthesis of branched-chain amino acids. Catalyzes the dehydration of (2R,3R)-2,3-dihydroxy-3-methylpentanoate (2,3-dihydroxy-3-methylvalerate) into 2-oxo-3-methylpentanoate (2-oxo-3-methylvalerate) and of (2R)-2,3-dihydroxy-3-methylbutanoate (2,3-dihydroxyisovalerate) into 2-oxo-3-methylbutanoate (2-oxoisovalerate), the penultimate precursor to L-isoleucine and L-valine, respectively. This chain is Dihydroxy-acid dehydratase, found in Lactococcus lactis subsp. cremoris (strain SK11).